A 340-amino-acid chain; its full sequence is Chitinase 7 (340 aa).

Residues 1 to 32 (MIAARAANLQVAMKALALAVLALAYAAATARA) form the signal peptide. A Chitin-binding type-1 domain is found at 33–73 (EQCGRQAGGARCPNRLCCSRWGWCGLTDDYCKGGCQSQCRV). Intrachain disulfides connect cysteine 35–cysteine 50, cysteine 44–cysteine 56, cysteine 49–cysteine 63, cysteine 67–cysteine 71, cysteine 118–cysteine 173, cysteine 185–cysteine 193, and cysteine 293–cysteine 323.

This sequence belongs to the glycosyl hydrolase 19 family. Chitinase class I subfamily. In terms of tissue distribution, expressed in pistils, stamens and lodicules.

The enzyme catalyses Random endo-hydrolysis of N-acetyl-beta-D-glucosaminide (1-&gt;4)-beta-linkages in chitin and chitodextrins.. Functionally, hydrolyzes chitin and may play a role in defense against fungal pathogens containing chitin. In Oryza sativa subsp. indica (Rice), this protein is Chitinase 7 (Cht7).